We begin with the raw amino-acid sequence, 390 residues long: Transforming growth factor beta-1 proprotein (390 aa).

Positions 1–29 are cleaved as a signal peptide; the sequence is MPPSRLRLLPLLLPLLWLLVLAPGRPASG. Positions 30–74 are straightjacket domain; sequence LSTCKTIDMELVKRKRIEAIRGQILSKLRLASPPSQGDVPPGPLP. The tract at residues 75–271 is arm domain; it reads EAVLALYNST…ATPLERAQHL (197 aa). N-linked (GlcNAc...) asparagine glycosylation is found at asparagine 82, asparagine 136, and asparagine 176. The segment at 226 to 252 is bowtie tail; that stretch reads DSKDNTLRVEINGIGPKRRGDLAAIHG. The Cell attachment site signature appears at 244–246; the sequence is RGD. 4 disulfide bridges follow: cysteine 285/cysteine 294, cysteine 293/cysteine 356, cysteine 322/cysteine 387, and cysteine 326/cysteine 389.

It belongs to the TGF-beta family. As to quaternary structure, homodimer; disulfide-linked. Interacts with the serine proteases, HTRA1 and HTRA3: the interaction with either inhibits TGFB1-mediated signaling and the HTRA protease activity is required for this inhibition. May interact with THSD4; this interaction may lead to sequestration by FBN1 microfibril assembly and attenuation of TGFB signaling. Interacts with CD109, DPT and ASPN. Interacts with EFEMP2. Interacts with TSKU; the interaction contributes to regulation of the hair cycle. Interacts with TGFBR3. In terms of assembly, homodimer; disulfide-linked. Interacts with transforming growth factor beta-1 (TGF-beta-1) chain; interaction is non-covalent and maintains TGF-beta-1 in a latent state; each latency-associated peptide (LAP) monomer interacts with TGF-beta-1 in the other monomer. Interacts with LTBP1; leading to regulation of TGF-beta-1 activation. Interacts with LRRC32/GARP; leading to regulation of TGF-beta-1 activation on the surface of activated regulatory T-cells (Tregs). Interacts with LRRC33/NRROS; leading to regulation of TGF-beta-1 in macrophages and microglia. Interacts (via cell attachment site) with integrins ITGAV and ITGB6 (ITGAV:ITGB6), leading to release of the active TGF-beta-1. Interacts with NREP; the interaction results in a decrease in TGFB1 autoinduction. Interacts with HSP90AB1; inhibits latent TGFB1 activation. Homodimer; disulfide-linked. Interacts with TGF-beta receptors (TGFBR1 and TGFBR2), leading to signal transduction. In terms of processing, transforming growth factor beta-1 proprotein: The precursor proprotein is cleaved in the Golgi apparatus by FURIN to form Transforming growth factor beta-1 (TGF-beta-1) and Latency-associated peptide (LAP) chains, which remain non-covalently linked, rendering TGF-beta-1 inactive. N-glycosylated. Deglycosylation leads to activation of Transforming growth factor beta-1 (TGF-beta-1); mechanisms triggering deglycosylation-driven activation of TGF-beta-1 are however unclear.

The protein localises to the secreted. Its subcellular location is the extracellular space. It is found in the extracellular matrix. Its function is as follows. Transforming growth factor beta-1 proprotein: Precursor of the Latency-associated peptide (LAP) and Transforming growth factor beta-1 (TGF-beta-1) chains, which constitute the regulatory and active subunit of TGF-beta-1, respectively. Required to maintain the Transforming growth factor beta-1 (TGF-beta-1) chain in a latent state during storage in extracellular matrix. Associates non-covalently with TGF-beta-1 and regulates its activation via interaction with 'milieu molecules', such as LTBP1, LRRC32/GARP and LRRC33/NRROS, that control activation of TGF-beta-1. Interaction with LRRC33/NRROS regulates activation of TGF-beta-1 in macrophages and microglia. Interaction with LRRC32/GARP controls activation of TGF-beta-1 on the surface of activated regulatory T-cells (Tregs). Interaction with integrins (ITGAV:ITGB6 or ITGAV:ITGB8) results in distortion of the Latency-associated peptide chain and subsequent release of the active TGF-beta-1. In terms of biological role, multifunctional protein that regulates the growth and differentiation of various cell types and is involved in various processes, such as normal development, immune function, microglia function and responses to neurodegeneration. Activation into mature form follows different steps: following cleavage of the proprotein in the Golgi apparatus, Latency-associated peptide (LAP) and Transforming growth factor beta-1 (TGF-beta-1) chains remain non-covalently linked rendering TGF-beta-1 inactive during storage in extracellular matrix. At the same time, LAP chain interacts with 'milieu molecules', such as LTBP1, LRRC32/GARP and LRRC33/NRROS that control activation of TGF-beta-1 and maintain it in a latent state during storage in extracellular milieus. TGF-beta-1 is released from LAP by integrins (ITGAV:ITGB6 or ITGAV:ITGB8): integrin-binding to LAP stabilizes an alternative conformation of the LAP bowtie tail and results in distortion of the LAP chain and subsequent release of the active TGF-beta-1. Once activated following release of LAP, TGF-beta-1 acts by binding to TGF-beta receptors (TGFBR1 and TGFBR2), which transduce signal. While expressed by many cells types, TGF-beta-1 only has a very localized range of action within cell environment thanks to fine regulation of its activation by Latency-associated peptide chain (LAP) and 'milieu molecules'. Plays an important role in bone remodeling: acts as a potent stimulator of osteoblastic bone formation, causing chemotaxis, proliferation and differentiation in committed osteoblasts. Can promote either T-helper 17 cells (Th17) or regulatory T-cells (Treg) lineage differentiation in a concentration-dependent manner. At high concentrations, leads to FOXP3-mediated suppression of RORC and down-regulation of IL-17 expression, favoring Treg cell development. At low concentrations in concert with IL-6 and IL-21, leads to expression of the IL-17 and IL-23 receptors, favoring differentiation to Th17 cells. Stimulates sustained production of collagen through the activation of CREB3L1 by regulated intramembrane proteolysis (RIP). Mediates SMAD2/3 activation by inducing its phosphorylation and subsequent translocation to the nucleus. Positively regulates odontoblastic differentiation in dental papilla cells, via promotion of IPO7-mediated translocation of phosphorylated SMAD2 to the nucleus and subsequent transcription of target genes. Can induce epithelial-to-mesenchymal transition (EMT) and cell migration in various cell types. The polypeptide is Transforming growth factor beta-1 proprotein (TGFB1) (Cavia porcellus (Guinea pig)).